Consider the following 177-residue polypeptide: MTDSANPTPSARPPRQPRTGTTGTGARKAGSKSGRSRAREFALQALYQHLVGGNDATAIDVFTRDLSGFHKADAAHYDALLHGCITTAQYMDELIAPQLDRKMSEISPIEHAVMWIGVYEFQHCQDVPWRVVINECIELAKEFGGTDGHKYVNGVLNGLAPQLRATEVAADKAAARG.

The interval M1–R35 is disordered. Low complexity predominate over residues P17–K28.

Belongs to the NusB family.

In terms of biological role, involved in transcription antitermination. Required for transcription of ribosomal RNA (rRNA) genes. Binds specifically to the boxA antiterminator sequence of the ribosomal RNA (rrn) operons. This chain is Transcription antitermination protein NusB, found in Acidovorax ebreus (strain TPSY) (Diaphorobacter sp. (strain TPSY)).